Consider the following 74-residue polypeptide: Acyl carrier protein (74 aa).

Residues 1-73 (MAVFEKVQEI…DLVAYVEEKT (73 aa)) enclose the Carrier domain. The residue at position 35 (S35) is an O-(pantetheine 4'-phosphoryl)serine.

It belongs to the acyl carrier protein (ACP) family. Post-translationally, 4'-phosphopantetheine is transferred from CoA to a specific serine of apo-ACP by AcpS. This modification is essential for activity because fatty acids are bound in thioester linkage to the sulfhydryl of the prosthetic group.

Its subcellular location is the cytoplasm. The protein operates within lipid metabolism; fatty acid biosynthesis. Functionally, carrier of the growing fatty acid chain in fatty acid biosynthesis. This Streptococcus thermophilus (strain CNRZ 1066) protein is Acyl carrier protein.